The following is a 512-amino-acid chain: ATP synthase subunit alpha (512 aa).

169–176 (GDRKTGKT) serves as a coordination point for ATP.

The protein belongs to the ATPase alpha/beta chains family. F-type ATPases have 2 components, CF(1) - the catalytic core - and CF(0) - the membrane proton channel. CF(1) has five subunits: alpha(3), beta(3), gamma(1), delta(1), epsilon(1). CF(0) has three main subunits: a(1), b(2) and c(9-12). The alpha and beta chains form an alternating ring which encloses part of the gamma chain. CF(1) is attached to CF(0) by a central stalk formed by the gamma and epsilon chains, while a peripheral stalk is formed by the delta and b chains.

Its subcellular location is the cell membrane. It carries out the reaction ATP + H2O + 4 H(+)(in) = ADP + phosphate + 5 H(+)(out). Its function is as follows. Produces ATP from ADP in the presence of a proton gradient across the membrane. The alpha chain is a regulatory subunit. The protein is ATP synthase subunit alpha of Limosilactobacillus fermentum (strain NBRC 3956 / LMG 18251) (Lactobacillus fermentum).